The following is a 281-amino-acid chain: 4-diphosphocytidyl-2-C-methyl-D-erythritol kinase (281 aa).

Lys-15 is an active-site residue. Residue 98–108 (PTGAGLGGGSS) participates in ATP binding. Residue Asp-140 is part of the active site.

This sequence belongs to the GHMP kinase family. IspE subfamily.

The enzyme catalyses 4-CDP-2-C-methyl-D-erythritol + ATP = 4-CDP-2-C-methyl-D-erythritol 2-phosphate + ADP + H(+). The protein operates within isoprenoid biosynthesis; isopentenyl diphosphate biosynthesis via DXP pathway; isopentenyl diphosphate from 1-deoxy-D-xylulose 5-phosphate: step 3/6. Functionally, catalyzes the phosphorylation of the position 2 hydroxy group of 4-diphosphocytidyl-2C-methyl-D-erythritol. In Neisseria meningitidis serogroup C (strain 053442), this protein is 4-diphosphocytidyl-2-C-methyl-D-erythritol kinase.